Consider the following 80-residue polypeptide: Exodeoxyribonuclease 7 small subunit (80 aa).

Belongs to the XseB family. In terms of assembly, heterooligomer composed of large and small subunits.

It is found in the cytoplasm. The enzyme catalyses Exonucleolytic cleavage in either 5'- to 3'- or 3'- to 5'-direction to yield nucleoside 5'-phosphates.. Functionally, bidirectionally degrades single-stranded DNA into large acid-insoluble oligonucleotides, which are then degraded further into small acid-soluble oligonucleotides. This chain is Exodeoxyribonuclease 7 small subunit, found in Pseudoalteromonas translucida (strain TAC 125).